Reading from the N-terminus, the 346-residue chain is DNA-directed RNA polymerase subunit alpha (346 aa).

The alpha N-terminal domain (alpha-NTD) stretch occupies residues 1-242 (MLIQDGDKLI…DQLSVFINFD (242 aa)). Residues 258 to 346 (LNPNLFKSID…WLKRKEKNEA (89 aa)) are alpha C-terminal domain (alpha-CTD).

It belongs to the RNA polymerase alpha chain family. As to quaternary structure, homodimer. The RNAP catalytic core consists of 2 alpha, 1 beta, 1 beta' and 1 omega subunit. When a sigma factor is associated with the core the holoenzyme is formed, which can initiate transcription.

The enzyme catalyses RNA(n) + a ribonucleoside 5'-triphosphate = RNA(n+1) + diphosphate. In terms of biological role, DNA-dependent RNA polymerase catalyzes the transcription of DNA into RNA using the four ribonucleoside triphosphates as substrates. The chain is DNA-directed RNA polymerase subunit alpha from Maridesulfovibrio salexigens (strain ATCC 14822 / DSM 2638 / NCIMB 8403 / VKM B-1763) (Desulfovibrio salexigens).